Here is a 150-residue protein sequence, read N- to C-terminus: Large ribosomal subunit protein bL9 (150 aa).

The protein belongs to the bacterial ribosomal protein bL9 family.

In terms of biological role, binds to the 23S rRNA. This is Large ribosomal subunit protein bL9 from Streptococcus gordonii (strain Challis / ATCC 35105 / BCRC 15272 / CH1 / DL1 / V288).